We begin with the raw amino-acid sequence, 317 residues long: R2-like ligand binding oxidase (317 aa).

Mn(2+)-binding residues include glutamate 73, glutamate 106, and histidine 109. Positions 76-167 form a cross-link, 3-(O4'-tyrosyl)-valine (Val-Tyr); it reads VTQDLQPFMA…ANQVRASVTY (92 aa). Residue glutamate 106 coordinates Fe cation. Glutamate 172, glutamate 207, and histidine 210 together coordinate Fe cation.

The protein belongs to the ribonucleoside diphosphate reductase small chain family. R2-like ligand binding oxidase subfamily. In terms of assembly, homodimer. Fe cation serves as cofactor. The cofactor is Mn(2+).

In terms of biological role, probable oxidase. This Saccharopolyspora erythraea (strain ATCC 11635 / DSM 40517 / JCM 4748 / NBRC 13426 / NCIMB 8594 / NRRL 2338) protein is R2-like ligand binding oxidase.